Reading from the N-terminus, the 104-residue chain is Large ribosomal subunit protein uL23 (104 aa).

It belongs to the universal ribosomal protein uL23 family. Part of the 50S ribosomal subunit. Contacts protein L29, and trigger factor when it is bound to the ribosome.

Functionally, one of the early assembly proteins it binds 23S rRNA. One of the proteins that surrounds the polypeptide exit tunnel on the outside of the ribosome. Forms the main docking site for trigger factor binding to the ribosome. This is Large ribosomal subunit protein uL23 from Cupriavidus metallidurans (strain ATCC 43123 / DSM 2839 / NBRC 102507 / CH34) (Ralstonia metallidurans).